The sequence spans 890 residues: Calcium-transporting ATPase (890 aa).

Residues 1-47 (MKFHEMGQTDLLEATNTSMKQGLTEKEVKKRLDKHGPNELQEGKKTS) are Cytoplasmic-facing. The helical transmembrane segment at 48 to 68 (ALLLFFAQFKDFMVLVLLAAT) threads the bilayer. At 69–78 (LISGFLGEYV) the chain is on the extracellular side. A helical membrane pass occupies residues 79–99 (DAVAIIAIVFVNGILGFFQER). Topologically, residues 100-238 (RAEQSLQALK…TLSTPLQRRL (139 aa)) are cytoplasmic. Residues 239–258 (EQLGKILIVVALLLTVLVVA) traverse the membrane as a helical segment. Residues 259–270 (VGVIQGHDLYSM) lie on the Extracellular side of the membrane. Residues 271–288 (FLAGVSLAVAAIPEGLPA) traverse the membrane as a helical segment. 4 residues coordinate Ca(2+): valine 279, alanine 280, isoleucine 282, and glutamate 284. Residues 289 to 688 (IVTVALSLGV…KEGRNIYENI (400 aa)) lie on the Cytoplasmic side of the membrane. The active-site 4-aspartylphosphate intermediate is aspartate 326. Positions 633 and 637 each coordinate Mg(2+). Residues 689–708 (RKFIRYLLASNVGEILVMLF) traverse the membrane as a helical segment. Ca(2+) is bound by residues asparagine 699 and glutamate 702. The Extracellular portion of the chain corresponds to 709 to 718 (AMLLALPLPL). The helical transmembrane segment at 719–739 (VPIQILWVNLVTDGLPAMALG) threads the bilayer. Asparagine 727, threonine 730, and aspartate 731 together coordinate Ca(2+). At 740–759 (MDQPEGDVMKRKPRHPKEGV) the chain is on the cytoplasmic side. The helical transmembrane segment at 760-782 (FARKLGWKVVSRGFLIGVATILA) threads the bilayer. Residues 783-798 (FIIVYHRNPENLAYAQ) lie on the Extracellular side of the membrane. The helical transmembrane segment at 799–818 (TIAFATLVLAQLIHVFDCRS) threads the bilayer. Residues 819–830 (ETSVFSRNPFQN) lie on the Cytoplasmic side of the membrane. The helical transmembrane segment at 831-849 (LYLIGAVLSSILLMLVVIY) threads the bilayer. At 850 to 864 (YPPLQPIFHTVAITP) the chain is on the extracellular side. Residues 865–885 (GDWMLVIGMSAIPTFLLAGSL) form a helical membrane-spanning segment. The Cytoplasmic portion of the chain corresponds to 886–890 (LTRKK).

Belongs to the cation transport ATPase (P-type) (TC 3.A.3) family. Type IIA subfamily. Phosphorylated in a Ca(2+)-dependent manner starting 4 hours after shifting to sporulation medium.

The protein resides in the cell membrane. It catalyses the reaction Ca(2+)(in) + ATP + H2O = Ca(2+)(out) + ADP + phosphate + H(+). This magnesium-dependent enzyme catalyzes the hydrolysis of ATP coupled with the transport of calcium. The sequence is that of Calcium-transporting ATPase (yloB) from Bacillus subtilis (strain 168).